Reading from the N-terminus, the 425-residue chain is MDRLEGPPRLILVADLDCTLVDHDDPENNDLLRFNALWEAHYRHDSLLVYCTGRSFSSYSSLRKKRPLLTPDIAVTSVGSEIVYGGGESTVSDVVWTARLDYKWNRDIVVEETLKFPKLEPQPDKSQEEHKVSFFVGREDAVEIMKVLPGILEERGVDVKLVYSNGYAFDVLPRGAGKQGALTYLLDKLDIEGKQPSNTLVCGDSGNDAELFNISDVYGVMVSNSHEELLQWYEENAKDNPKIFHASERCGAGMIEAIQRFNLGPNVSPRDVMDTENFHGESLNPAHEVVQFYLFYERWRCGEVEKSDKYLQNLKSLSSPLGIFVHPSGVEKPIHEWIDEMENLYGDGKEKKFRIWLDNVTSSHISSDTWLAKFVKHELSEGKVRSCSTKVLLSYKEEKQRLTWMHIHQSWLDESSSDDQEKWIF.

This sequence belongs to the sucrose phosphatase family. Homodimer. The cofactor is Mg(2+).

The enzyme catalyses sucrose 6(F)-phosphate + H2O = sucrose + phosphate. The protein operates within glycan biosynthesis; sucrose biosynthesis; sucrose from D-fructose 6-phosphate and UDP-alpha-D-glucose: step 2/2. In terms of biological role, catalyzes the final step of sucrose synthesis. The sequence is that of Probable sucrose-phosphatase 3a (SPP3A) from Arabidopsis thaliana (Mouse-ear cress).